We begin with the raw amino-acid sequence, 535 residues long: Dimethylaniline monooxygenase [N-oxide-forming] 2 (535 aa).

Ala2 is subject to N-acetylalanine. Residues 9–13 (GAGVS), Glu32, 40–41 (VW), and 61–62 (NT) each bind FAD. NADP(+) contacts are provided by residues 60 to 61 (TN) and 195 to 198 (SGSD). Residue Lys492 forms a Glycyl lysine isopeptide (Lys-Gly) (interchain with G-Cter in SUMO) linkage. The helical transmembrane segment at 510–530 (FSVSFLLKILGLLAVVVAFFC) threads the bilayer.

Belongs to the FMO family. The cofactor is FAD. Requires Mg(2+) as cofactor.

Its subcellular location is the microsome membrane. It is found in the endoplasmic reticulum membrane. In terms of biological role, catalyzes the oxidative metabolism of numerous xenobiotics, including mainly therapeutic drugs and insecticides that contain a soft nucleophile, most commonly nitrogen and sulfur and participates to their bioactivation. In Pan troglodytes (Chimpanzee), this protein is Dimethylaniline monooxygenase [N-oxide-forming] 2.